The primary structure comprises 357 residues: Snake venom metalloproteinase H4 (357 aa).

A signal peptide spans 1–6 (FPYQGS). Positions 7–176 (SIMLESGKVN…KKASQLIVST (170 aa)) are excised as a propeptide. The Peptidase M12B domain maps to 180–357 (RYMEIVIVVD…EVIKYFLDSK (178 aa)). Histidine 316 is a Zn(2+) binding site. The active site involves glutamate 317. Histidine 320 and histidine 326 together coordinate Zn(2+). Cysteine 333 and cysteine 339 are disulfide-bonded.

It belongs to the venom metalloproteinase (M12B) family. P-I subfamily. As to quaternary structure, monomer. Zn(2+) is required as a cofactor. Expressed by the venom gland.

The protein localises to the secreted. In terms of biological role, snake venom metalloproteinase that impairs hemostasis in the envenomed animal. The protein is Snake venom metalloproteinase H4 of Deinagkistrodon acutus (Hundred-pace snake).